The following is a 196-amino-acid chain: APGW-amide-related neuropeptide (196 aa).

Positions 1-22 (METLNIFLVIFSLLGTIIIASS) are cleaved as a signal peptide. The propeptide occupies 23–48 (SDESSERKKRDLDTIDDTNNDFLTAD). A Tryptophan amide modification is found at W54. The propeptide occupies 58–68 (SFDDDILNNLD). A Tryptophan amide modification is found at W74. Positions 78–88 (SDMLFDSEEIE) are excised as a propeptide. The residue at position 94 (W94) is a Tryptophan amide. Positions 98–105 (SSSLYDDE) are excised as a propeptide. The residue at position 111 (W111) is a Tryptophan amide. A propeptide spanning residues 115–129 (SSALLDDLSLYNSIV) is cleaved from the precursor. At W135 the chain carries Tryptophan amide. The propeptide occupies 139–146 (SDTFKVDI). 2 positions are modified to tryptophan amide: W151 and W158. A propeptide spanning residues 162–196 (SGPNMCMDFQDEILQLYKLLNEAEKLHSECEALNI) is cleaved from the precursor.

As to expression, expressed in cerebral, pedal and visceral ganglia. TPGW-amide is found in pedal and cerebral ganglia and in shell adductor muscle (at protein level). RPGW-amide and KPGW-amide are found in pedal retractor muscle, ABRM and shell adductor muscle (at protein level).

Its function is as follows. RPGW-amide, KPGW-amide and TPGW-amide tetrapeptides are involved in control of muscle contraction and may function as neurotransmitters. These peptides increase tension of the pedal retractor muscle and, in conjunction with FMRF-amide, increase peak tension of the anterior byssus retractor muscle (ABRM). This is APGW-amide-related neuropeptide from Mytilus edulis (Blue mussel).